The primary structure comprises 542 residues: Tripartite motif-containing protein 26 (542 aa).

The RING-type zinc finger occupies 16-57; sequence CSICLDYLRDPVTIDCGHVFCRSCTSDIRPISGNRPVCPLCK. The B box-type zinc finger occupies 97–138; it reads QDMKLCERHQEKLHYYCEDDGKLLCVMCRESREHRPHTAVLV. Cys102, His105, Cys124, and His130 together coordinate Zn(2+). A coiled-coil region spans residues 197 to 243; that stretch reads QFLKKREQHLLDQLATLEQLLTEGREKFKTRGVSELDRLTLVISELE. The region spanning 298–542 is the B30.2/SPRY domain; sequence RGLRQFQGKL…WPEARLLLRP (245 aa). Residues 379–440 are disordered; it reads REGWSEDEEE…EEEEEVQESC (62 aa). Acidic residues-rich tracts occupy residues 383-405 and 413-437; these read SEDE…EEPG and WETD…EEVQ. A coiled-coil region spans residues 411–440; sequence EDWETDEEDESLGEEEEEEEEEEEEVQESC.

The protein belongs to the TRIM/RBCC family. Interacts with TBK1; this interaction bridges together TBK1 and NEMO in order to activate TBK1. Interacts with INCA1. Post-translationally, autoubiquitinates upon viral infection. In turn, autoubiquitinated TRIM26 recruits NEMO and bridges TBK1-NEMO interaction.

Its subcellular location is the cytoplasm. It is found in the nucleus. The catalysed reaction is S-ubiquitinyl-[E2 ubiquitin-conjugating enzyme]-L-cysteine + [acceptor protein]-L-lysine = [E2 ubiquitin-conjugating enzyme]-L-cysteine + N(6)-ubiquitinyl-[acceptor protein]-L-lysine.. E3 ubiquitin-protein ligase which regulates the IFN-beta production and antiviral response downstream of various DNA-encoded pattern-recognition receptors (PRRs). Also plays a central role in determining the response to different forms of oxidative stress by controlling levels of DNA glycosylases NEIL1, NEIL3 and NTH1 that are involved in repair of damaged DNA. Promotes nuclear IRF3 ubiquitination and proteasomal degradation. Bridges together TBK1 and NEMO during the innate response to viral infection leading to the activation of TBK1. Positively regulates LPS-mediated inflammatory innate immune response by catalyzing the 'Lys-11'-linked polyubiquitination of TAB1 to enhance its activation and subsequent NF-kappa-B and MAPK signaling. In a manner independent of its catalytic activity, inhibits WWP2, a SOX2-directed E3 ubiquitin ligase, and thus protects SOX2 from polyubiquitination and proteasomal degradation. Ubiquitinates the histone acetyltransferase protein complex component PHF20 and thereby triggers its degradation in the nucleus after its recruitment by the histone demethylase KDM6B, serving as a scaffold protein. Upon induction by TGF-beta, ubiquitinates the TFIID component TAF7 for proteasomal degradation. Induces ferroptosis by ubiquitinating SLC7A11, a critical protein for lipid reactive oxygen species (ROS) scavenging. The polypeptide is Tripartite motif-containing protein 26 (Trim26) (Rattus norvegicus (Rat)).